A 103-amino-acid polypeptide reads, in one-letter code: V-type sodium ATPase subunit G (103 aa).

This sequence belongs to the V-ATPase F subunit family.

Its function is as follows. Involved in ATP-driven sodium extrusion. In Enterococcus hirae (strain ATCC 9790 / DSM 20160 / JCM 8729 / LMG 6399 / NBRC 3181 / NCIMB 6459 / NCDO 1258 / NCTC 12367 / WDCM 00089 / R), this protein is V-type sodium ATPase subunit G (ntpG).